The sequence spans 306 residues: Elongation factor Ts (306 aa).

The tract at residues 80-83 (TDFV) is involved in Mg(2+) ion dislocation from EF-Tu.

The protein belongs to the EF-Ts family.

It localises to the cytoplasm. Functionally, associates with the EF-Tu.GDP complex and induces the exchange of GDP to GTP. It remains bound to the aminoacyl-tRNA.EF-Tu.GTP complex up to the GTP hydrolysis stage on the ribosome. This Leptothrix cholodnii (strain ATCC 51168 / LMG 8142 / SP-6) (Leptothrix discophora (strain SP-6)) protein is Elongation factor Ts.